Here is a 37-residue protein sequence, read N- to C-terminus: Cytochrome b6-f complex subunit 5 (37 aa).

A helical membrane pass occupies residues 5–25; it reads LLCGIVLGLIPVTLLGLFVAA.

This sequence belongs to the PetG family. In terms of assembly, the 4 large subunits of the cytochrome b6-f complex are cytochrome b6, subunit IV (17 kDa polypeptide, PetD), cytochrome f and the Rieske protein, while the 4 small subunits are PetG, PetL, PetM and PetN. The complex functions as a dimer.

It localises to the cellular thylakoid membrane. Its function is as follows. Component of the cytochrome b6-f complex, which mediates electron transfer between photosystem II (PSII) and photosystem I (PSI), cyclic electron flow around PSI, and state transitions. PetG is required for either the stability or assembly of the cytochrome b6-f complex. The chain is Cytochrome b6-f complex subunit 5 from Synechococcus sp. (strain WH7803).